The following is a 300-amino-acid chain: Ribosomal protein bS6--L-glutamate ligase (300 aa).

One can recognise an ATP-grasp domain in the interval 104 to 287; the sequence is MQLLARQGID…IAGKMIRWIE (184 aa). ATP is bound by residues lysine 141, 178–179, aspartate 187, and 211–213; these read EY and RSN. Mg(2+) contacts are provided by aspartate 248, glutamate 260, and asparagine 262. Aspartate 248, glutamate 260, and asparagine 262 together coordinate Mn(2+).

This sequence belongs to the RimK family. The cofactor is Mg(2+). Mn(2+) is required as a cofactor.

In terms of biological role, an L-glutamate ligase that catalyzes the ATP-dependent post-translational addition of glutamate residues to the C-terminus of ribosomal protein bS6 (RpsF). Is also able to catalyze the synthesis of poly-alpha-glutamate in vitro, via ATP hydrolysis from unprotected glutamate as substrate. The number of glutamate residues added to either RpsF or to poly-alpha-glutamate changes with pH. The chain is Ribosomal protein bS6--L-glutamate ligase from Shigella dysenteriae serotype 1 (strain Sd197).